We begin with the raw amino-acid sequence, 215 residues long: Pyrrolidone-carboxylate peptidase (215 aa).

Catalysis depends on residues Glu-78, Cys-141, and His-165.

Belongs to the peptidase C15 family. In terms of assembly, homotetramer.

It is found in the cytoplasm. It catalyses the reaction Release of an N-terminal pyroglutamyl group from a polypeptide, the second amino acid generally not being Pro.. In terms of biological role, removes 5-oxoproline from various penultimate amino acid residues except L-proline. The protein is Pyrrolidone-carboxylate peptidase (pcp) of Streptococcus pyogenes serotype M1.